The sequence spans 143 residues: Large ribosomal subunit protein bL17 (143 aa).

Belongs to the bacterial ribosomal protein bL17 family. In terms of assembly, part of the 50S ribosomal subunit. Contacts protein L32.

The polypeptide is Large ribosomal subunit protein bL17 (Chelativorans sp. (strain BNC1)).